Reading from the N-terminus, the 256-residue chain is Adenylate kinase (256 aa).

49 to 54 (GAGKGT) serves as a coordination point for ATP. An NMP region spans residues 69 to 98 (ATGDMLREQVQQKTPLGIEAKKIMDAGGLV). AMP-binding positions include threonine 70, arginine 75, 96-98 (GLV), 125-128 (GFPR), and glutamine 132. The tract at residues 166–203 (GRLVHPASGRSYHKEFNPPKKRNVDDVTGEPLIQRSDD) is LID. ATP is bound by residues arginine 167 and 176–177 (SY). The AMP site is built by arginine 200 and arginine 211. Residue glutamine 239 participates in ATP binding.

It belongs to the adenylate kinase family. AK2 subfamily. In terms of assembly, monomer.

The protein resides in the cytoplasm. It localises to the cytosol. Its subcellular location is the mitochondrion intermembrane space. The enzyme catalyses AMP + ATP = 2 ADP. In terms of biological role, catalyzes the reversible transfer of the terminal phosphate group between ATP and AMP. Plays an important role in cellular energy homeostasis and in adenine nucleotide metabolism. Adenylate kinase activity is critical for regulation of the phosphate utilization and the AMP de novo biosynthesis pathways. This chain is Adenylate kinase, found in Laccaria bicolor (strain S238N-H82 / ATCC MYA-4686) (Bicoloured deceiver).